A 296-amino-acid chain; its full sequence is Ribosomal RNA small subunit methyltransferase A (296 aa).

S-adenosyl-L-methionine is bound by residues Asn30, Leu32, Gly57, Glu78, Asp103, and Asn128.

Belongs to the class I-like SAM-binding methyltransferase superfamily. rRNA adenine N(6)-methyltransferase family. RsmA subfamily.

It is found in the cytoplasm. The catalysed reaction is adenosine(1518)/adenosine(1519) in 16S rRNA + 4 S-adenosyl-L-methionine = N(6)-dimethyladenosine(1518)/N(6)-dimethyladenosine(1519) in 16S rRNA + 4 S-adenosyl-L-homocysteine + 4 H(+). Its function is as follows. Specifically dimethylates two adjacent adenosines (A1518 and A1519) in the loop of a conserved hairpin near the 3'-end of 16S rRNA in the 30S particle. May play a critical role in biogenesis of 30S subunits. The polypeptide is Ribosomal RNA small subunit methyltransferase A (Staphylococcus haemolyticus (strain JCSC1435)).